Consider the following 287-residue polypeptide: Probable glucose uptake protein GlcU (287 aa).

A run of 9 helical transmembrane segments spans residues 7 to 29 (LIALLPALFWGSVVLINVFVGGG), 34 to 56 (IRGTTLGALIVGLGLLITGFAKF), 58 to 75 (NPTVIIVGLISGALWAFG), 114 to 136 (WSSMTQIIFGLIAMILLVTGVAL), 156 to 178 (MGILIVSTVGYVGFVVLGDIFGV), 183 to 202 (ALFFQSVGMAIGGFILSMNH), 209 to 228 (TALNLLPGVIWGIGNLFMFY), 233 to 255 (VGVATSFSLSQLLVIVSTLGGIF), and 267 to 286 (TGIWVGIIIIVIAAIILGNL).

This sequence belongs to the GRP transporter (TC 2.A.7.5) family.

The protein localises to the cell membrane. Its function is as follows. Involved in the uptake of glucose. This is Probable glucose uptake protein GlcU (glcU) from Staphylococcus aureus (strain MRSA252).